The chain runs to 95 residues: PqqA binding protein (95 aa).

This sequence belongs to the PqqD family. In terms of assembly, monomer. Interacts with PqqE.

It functions in the pathway cofactor biosynthesis; pyrroloquinoline quinone biosynthesis. Functions as a PqqA binding protein and presents PqqA to PqqE, in the pyrroloquinoline quinone (PQQ) biosynthetic pathway. This is PqqA binding protein from Rahnella aquatilis.